The primary structure comprises 619 residues: MADIPARTEMKVTTGPIRGSRKIHVEGPQGVRVAMREIALEPSSGEPPVRVYDCSGPYTDPNAHIDIMAGLPALRRDWILGRGDVEDYEGRAIKPEDNGLKGPDRSGGVTPFPNVVRRPLRAKAGQNVSQMHYARRGIITPEMEYVAIRENVGRAALKEKLLRDGEDFGAAIPDFVTPEFVRDEVARGRAIIPSNINHPESEPMAIGRNFLVKINANIGNSAVASDVAAEVDKMVWSIRWGADTVMDLSTGRNIHDTREWILRNSPVPIGTVPIYQALEKVGGIAEDLTWEIFRDTLIEQAEQGVDYFTIHAGVRLPFIPMTAKRVTGIVSRGGSIMAKWCLAHHRESFLYERFDEICEIMKAYDVAFSLGDGLRPGSIADANDEAQFSELKTLGELTQIAWQHDVQVMIEGPGHVPMHKIKANMDKQLEACGEAPFYTLGPLTTDIAPGYDHITSAIGAAMIGWFGTAMLCYVTPKEHLGLPDRDDVKVGVVTYKLAAHAADLAKGHPAAKLRDDALSRARFEFRWRDQFNLSLDPDTAEQYHDQTLPAEGAKTAHFCSMCGPKFCSMKITQEVRDFAATRNAPADQFIAAGDAEAGMRAMSDVFREKGGEIYLPAAE.

Residues 93-104 (IKPEDNGLKGPD) are compositionally biased toward basic and acidic residues. A disordered region spans residues 93 to 114 (IKPEDNGLKGPDRSGGVTPFPN). Substrate contacts are provided by residues N217, M246, Y275, H311, 331-333 (SRG), 372-375 (DGLR), and E411. A Zn(2+)-binding site is contributed by H415. Residue Y438 participates in substrate binding. Position 479 (H479) interacts with Zn(2+). [4Fe-4S] cluster contacts are provided by C559, C562, and C567.

The protein belongs to the ThiC family. Homodimer. The cofactor is [4Fe-4S] cluster.

It carries out the reaction 5-amino-1-(5-phospho-beta-D-ribosyl)imidazole + S-adenosyl-L-methionine = 4-amino-2-methyl-5-(phosphooxymethyl)pyrimidine + CO + 5'-deoxyadenosine + formate + L-methionine + 3 H(+). It functions in the pathway cofactor biosynthesis; thiamine diphosphate biosynthesis. Functionally, catalyzes the synthesis of the hydroxymethylpyrimidine phosphate (HMP-P) moiety of thiamine from aminoimidazole ribotide (AIR) in a radical S-adenosyl-L-methionine (SAM)-dependent reaction. This is Phosphomethylpyrimidine synthase from Rhizorhabdus wittichii (strain DSM 6014 / CCUG 31198 / JCM 15750 / NBRC 105917 / EY 4224 / RW1) (Sphingomonas wittichii).